The chain runs to 388 residues: Granulocyte-macrophage colony-stimulating factor receptor subunit alpha (388 aa).

The signal sequence occupies residues 1 to 29 (MTSSHAMNITPLAQLALLFSTLLLPGTQA). Residues 30 to 327 (LLAPTTPDAG…PLEAEDTRVP (298 aa)) are Extracellular-facing. N-linked (GlcNAc...) asparagine glycosylation is found at N43, N63, N106, N132, N165, and N237. Residues 228–324 (PPRDVTASCN…PAHPLEAEDT (97 aa)) form the Fibronectin type-III domain. The short motif at 310 to 314 (WGEWS) is the WSXWS motif element. The chain crosses the membrane as a helical span at residues 328-348 (GALLYAVTACAVLLCALALGV). The Cytoplasmic segment spans residues 349 to 388 (TCRRFEVTRRLFPPIPGIRDKVSDDVRVNPETLRKDLLQP). The Box 1 motif motif lies at 359–367 (LFPPIPGIR).

Belongs to the type I cytokine receptor family. Type 5 subfamily. Heterodimer of an alpha and a beta subunit. The beta subunit is common to the IL3, IL5 and GM-CSF receptors. The signaling GM-CSF receptor complex is a dodecamer of two head-to-head hexamers of two alpha, two beta, and two ligand subunits.

Its subcellular location is the membrane. Low affinity receptor for granulocyte-macrophage colony-stimulating factor. Transduces a signal that results in the proliferation, differentiation, and functional activation of hematopoietic cells. This chain is Granulocyte-macrophage colony-stimulating factor receptor subunit alpha (Csf2ra), found in Mus musculus (Mouse).